The sequence spans 310 residues: Ornithine carbamoyltransferase (310 aa).

Carbamoyl phosphate-binding positions include 58–61 (STRT), Gln85, Arg109, and 136–139 (HPCQ). Residues Asn167, Asp227, and 231 to 232 (SM) contribute to the L-ornithine site. Carbamoyl phosphate is bound by residues 266–267 (CL) and Arg294.

Belongs to the aspartate/ornithine carbamoyltransferase superfamily. OTCase family.

The protein localises to the cytoplasm. It carries out the reaction carbamoyl phosphate + L-ornithine = L-citrulline + phosphate + H(+). It functions in the pathway amino-acid biosynthesis; L-arginine biosynthesis; L-arginine from L-ornithine and carbamoyl phosphate: step 1/3. In terms of biological role, reversibly catalyzes the transfer of the carbamoyl group from carbamoyl phosphate (CP) to the N(epsilon) atom of ornithine (ORN) to produce L-citrulline. The protein is Ornithine carbamoyltransferase of Rhodopseudomonas palustris (strain ATCC BAA-98 / CGA009).